The sequence spans 282 residues: Fibrinogen-like protein A (282 aa).

Positions 1–24 (MFSFIMKAAILLILVGCISFCISS) are cleaved as a signal peptide. A Fibrinogen C-terminal domain is found at 61-281 (SHSPEYPRDC…FAEMKLRNRS (221 aa)). Intrachain disulfides connect cysteine 70/cysteine 101 and cysteine 224/cysteine 240.

In Apostichopus parvimensis (Warty sea cucumber), this protein is Fibrinogen-like protein A.